A 223-amino-acid polypeptide reads, in one-letter code: Protein phosphatase 1 regulatory subunit 3C (223 aa).

Residues 104–209 (REQLTRKLVC…NNDGKNYSLH (106 aa)) enclose the CBM21 domain.

As to quaternary structure, interacts with PPP1CC catalytic subunit of PP1 and associates with glycogen. Forms complexes with glycogen phosphorylase, glycogen synthase and phosphorylase kinase which is necessary for its regulation of PP1 activity.

Functionally, acts as a glycogen-targeting subunit for PP1 and regulates its activity. Activates glycogen synthase, reduces glycogen phosphorylase activity and limits glycogen breakdown. In Xenopus tropicalis (Western clawed frog), this protein is Protein phosphatase 1 regulatory subunit 3C.